The primary structure comprises 142 residues: Large-conductance mechanosensitive channel (142 aa).

A run of 3 helical transmembrane segments spans residues 14-34 (VVDLAVGVIIGAAFGAIVNSL), 38-58 (VIMPIIGAITGGLDFSNYYIP), and 82-102 (GQFLTLAVNFTIIAFVLFMVI).

This sequence belongs to the MscL family. In terms of assembly, homopentamer.

It is found in the cell inner membrane. Functionally, channel that opens in response to stretch forces in the membrane lipid bilayer. May participate in the regulation of osmotic pressure changes within the cell. In Methylorubrum populi (strain ATCC BAA-705 / NCIMB 13946 / BJ001) (Methylobacterium populi), this protein is Large-conductance mechanosensitive channel.